The chain runs to 216 residues: tRNA (guanine-N(7)-)-methyltransferase (216 aa).

S-adenosyl-L-methionine is bound by residues glutamate 44, glutamate 69, asparagine 97, and aspartate 119. The active site involves aspartate 119. Substrate contacts are provided by residues lysine 123, aspartate 155, and 192 to 195 (TEYE).

Belongs to the class I-like SAM-binding methyltransferase superfamily. TrmB family.

It carries out the reaction guanosine(46) in tRNA + S-adenosyl-L-methionine = N(7)-methylguanosine(46) in tRNA + S-adenosyl-L-homocysteine. Its pathway is tRNA modification; N(7)-methylguanine-tRNA biosynthesis. Its function is as follows. Catalyzes the formation of N(7)-methylguanine at position 46 (m7G46) in tRNA. The protein is tRNA (guanine-N(7)-)-methyltransferase of Lysinibacillus sphaericus (strain C3-41).